The following is a 673-amino-acid chain: Protein kinase C delta type (673 aa).

Residues 1-106 (MAPFLRISFN…KNNGKAEFWL (106 aa)) enclose the C2 domain. 2 positions are modified to phosphothreonine: Thr43 and Thr50. Position 64 is a phosphotyrosine (Tyr64). The residue at position 130 (Ser130) is a Phosphoserine. Thr141 is modified (phosphothreonine). Residue Tyr155 is modified to Phosphotyrosine. The Phorbol-ester/DAG-type 1 zinc finger occupies 158–208 (NHEFIATFFGQPTFCSVCKEFVWGLNKQGYKCRQCNAAIHKKCIDKIIGRC). Phosphothreonine is present on Thr218. The Phorbol-ester/DAG-type 2 zinc-finger motif lies at 230–280 (PHRFKVYNYMSPTFCDHCGTLLWGLVKQGLKCEDCGMNVHHKCREKVANLC). Ser299 carries the post-translational modification Phosphoserine; by autocatalysis. 2 positions are modified to phosphotyrosine; by SRC: Tyr311 and Tyr332. Residues 347–601 (FTFQKVLGKG…TGNIRLHPFF (255 aa)) form the Protein kinase domain. 353-361 (LGKGSFGKV) lines the ATP pocket. Tyr372 bears the Phosphotyrosine mark. An ATP-binding site is contributed by Lys376. Thr449 is modified (phosphothreonine). Catalysis depends on Asp471, which acts as the Proton acceptor. Ser504 is subject to Phosphoserine. Thr505 is subject to Phosphothreonine; by autocatalysis. Tyr565 is subject to Phosphotyrosine. Residues 602-673 (KTINWNLLEK…VNPKYEQFLE (72 aa)) form the AGC-kinase C-terminal domain. Ser643, Ser652, and Ser662 each carry phosphoserine.

It belongs to the protein kinase superfamily. AGC Ser/Thr protein kinase family. PKC subfamily. Interacts with PDPK1 (via N-terminal region). Interacts with RAD9A. Interacts with CDCP1. Interacts with MUC1. Interacts with VASP. Interacts with CAVIN3. Interacts with PRKD2 (via N-terminus and zing-finger domain 1 and 2) in response to oxidative stress; the interaction is independent of PRKD2 tyrosine phosphorylation. Interacts with PLSC3; interaction is enhanced by UV irradiation. Post-translationally, autophosphorylated and/or phosphorylated at Thr-505, within the activation loop; phosphorylation at Thr-505 is not a prerequisite for enzymatic activity. Autophosphorylated at Ser-299. Upon TNFSF10/TRAIL treatment, phosphorylated at Tyr-155; phosphorylation is required for its translocation to the endoplasmic reticulum and cleavage by caspase-3. Phosphorylated at Tyr-311, Tyr-332 and Tyr-565; phosphorylation of Tyr-311 and Tyr-565 following thrombin or zymosan stimulation potentiates its kinase activity. Phosphorylated by protein kinase PDPK1; phosphorylation is inhibited by the apoptotic C-terminal cleavage product of PKN2. Phosphorylated at Tyr-311 and Tyr-332 by SRC; phosphorylation leads to enhanced autophosphorylation at Thr-505. Phosphorylated at Tyr-311 through a SYK and SRC mechanism downstream of C-type lectin receptors activation, promoting its activation. In terms of processing, proteolytically cleaved into a catalytic subunit and a regulatory subunit by caspase-3 during apoptosis which results in kinase activation.

Its subcellular location is the cytoplasm. It localises to the nucleus. The protein resides in the perinuclear region. The protein localises to the cell membrane. It is found in the mitochondrion. Its subcellular location is the endomembrane system. It catalyses the reaction L-seryl-[protein] + ATP = O-phospho-L-seryl-[protein] + ADP + H(+). It carries out the reaction L-threonyl-[protein] + ATP = O-phospho-L-threonyl-[protein] + ADP + H(+). The enzyme catalyses L-tyrosyl-[protein] + ATP = O-phospho-L-tyrosyl-[protein] + ADP + H(+). With respect to regulation, novel PKCs (PRKCD, PRKCE, PRKCH and PRKCQ) are calcium-insensitive, but activated by diacylglycerol (DAG) and phosphatidylserine. Three specific sites; Thr-505 (activation loop of the kinase domain), Ser-643 (turn motif) and Ser-662 (hydrophobic region), need to be phosphorylated for its full activation. Activated by caspase-3 (CASP3) cleavage during apoptosis. After cleavage, the pseudosubstrate motif in the regulatory subunit is released from the substrate recognition site of the catalytic subunit, which enables PRKCD to become constitutively activated. The catalytic subunit which displays properties of a sphingosine-dependent protein kinase is activated by D-erythro-sphingosine (Sph) or N,N-dimethyl-D-erythrosphingosine (DMS) or N,N,N-trimethyl-D-erythrosphingosine (TMS), but not by ceramide or Sph-1-P and is strongly inhibited by phosphatidylserine. Its function is as follows. Calcium-independent, phospholipid- and diacylglycerol (DAG)-dependent serine/threonine-protein kinase that plays contrasting roles in cell death and cell survival by functioning as a pro-apoptotic protein during DNA damage-induced apoptosis, but acting as an anti-apoptotic protein during cytokine receptor-initiated cell death, is involved in tumor suppression, is required for oxygen radical production by NADPH oxidase and acts as a positive or negative regulator in platelet functional responses. Upon DNA damage, activates the promoter of the death-promoting transcription factor BCLAF1/Btf to trigger BCLAF1-mediated p53/TP53 gene transcription and apoptosis. In response to oxidative stress, interact with and activate CHUK/IKKA in the nucleus, causing the phosphorylation of p53/TP53. In the case of ER stress or DNA damage-induced apoptosis, can form a complex with the tyrosine-protein kinase ABL1 which trigger apoptosis independently of p53/TP53. In cytosol can trigger apoptosis by activating MAPK11 or MAPK14, inhibiting AKT1 and decreasing the level of X-linked inhibitor of apoptosis protein (XIAP), whereas in nucleus induces apoptosis via the activation of MAPK8 or MAPK9. Upon ionizing radiation treatment, is required for the activation of the apoptosis regulators BAX and BAK, which trigger the mitochondrial cell death pathway. Can phosphorylate MCL1 and target it for degradation which is sufficient to trigger for BAX activation and apoptosis. Is required for the control of cell cycle progression both at G1/S and G2/M phases. Mediates phorbol 12-myristate 13-acetate (PMA)-induced inhibition of cell cycle progression at G1/S phase by up-regulating the CDK inhibitor CDKN1A/p21 and inhibiting the cyclin CCNA2 promoter activity. In response to UV irradiation can phosphorylate CDK1, which is important for the G2/M DNA damage checkpoint activation. Can protect glioma cells from the apoptosis induced by TNFSF10/TRAIL, probably by inducing increased phosphorylation and subsequent activation of AKT1. Can also act as tumor suppressor upon mitogenic stimulation with PMA or TPA. In N-formyl-methionyl-leucyl-phenylalanine (fMLP)-treated cells, is required for NCF1 (p47-phox) phosphorylation and activation of NADPH oxidase activity, and regulates TNF-elicited superoxide anion production in neutrophils, by direct phosphorylation and activation of NCF1 or indirectly through MAPK1/3 (ERK1/2) signaling pathways. Involved in antifungal immunity by mediating phosphorylation and activation of CARD9 downstream of C-type lectin receptors activation, promoting interaction between CARD9 and BCL10, followed by activation of NF-kappa-B and MAP kinase p38 pathways. May also play a role in the regulation of NADPH oxidase activity in eosinophil after stimulation with IL5, leukotriene B4 or PMA. In collagen-induced platelet aggregation, acts a negative regulator of filopodia formation and actin polymerization by interacting with and negatively regulating VASP phosphorylation. Downstream of PAR1, PAR4 and CD36/GP4 receptors, regulates differentially platelet dense granule secretion; acts as a positive regulator in PAR-mediated granule secretion, whereas it negatively regulates CD36/GP4-mediated granule release. Phosphorylates MUC1 in the C-terminal and regulates the interaction between MUC1 and beta-catenin. The catalytic subunit phosphorylates 14-3-3 proteins (YWHAB, YWHAZ and YWHAH) in a sphingosine-dependent fashion. Phosphorylates ELAVL1 in response to angiotensin-2 treatment. Phosphorylates mitochondrial phospholipid scramblase 3 (PLSCR3), resulting in increased cardiolipin expression on the mitochondrial outer membrane which facilitates apoptosis. Phosphorylates SMPD1 which induces SMPD1 secretion. In terms of biological role, truncated isoform 2 is inactive. This Rattus norvegicus (Rat) protein is Protein kinase C delta type.